The following is a 367-amino-acid chain: 5-amino-6-(D-ribitylamino)uracil--L-tyrosine 4-hydroxyphenyl transferase (367 aa).

One can recognise a Radical SAM core domain in the interval 56–290 (VTYVRNQNIN…MFAVARLFLD (235 aa)). 3 residues coordinate [4Fe-4S] cluster: C70, C74, and C77.

It belongs to the radical SAM superfamily. CofH family. In terms of assembly, consists of two subunits, CofG and CofH. It depends on [4Fe-4S] cluster as a cofactor.

The enzyme catalyses 5-amino-6-(D-ribitylamino)uracil + L-tyrosine + S-adenosyl-L-methionine = 5-amino-5-(4-hydroxybenzyl)-6-(D-ribitylimino)-5,6-dihydrouracil + 2-iminoacetate + 5'-deoxyadenosine + L-methionine + H(+). Its pathway is cofactor biosynthesis; coenzyme F0 biosynthesis. Catalyzes the radical-mediated synthesis of 5-amino-5-(4-hydroxybenzyl)-6-(D-ribitylimino)-5,6-dihydrouracil from 5-amino-6-(D-ribitylamino)uracil and L-tyrosine. The protein is 5-amino-6-(D-ribitylamino)uracil--L-tyrosine 4-hydroxyphenyl transferase of Methanoculleus marisnigri (strain ATCC 35101 / DSM 1498 / JR1).